The sequence spans 277 residues: Large ribosomal subunit protein uL2 (277 aa).

Disordered stretches follow at residues 37 to 60 and 223 to 265; these read KNST…GHKH and VVMN…KRTD. Polar residues predominate over residues 39-49; that stretch reads STAGRNSNGHI. The segment covering 50-60 has biased composition (basic residues); the sequence is TTRHKGGGHKH. Over residues 229-244 the composition is skewed to basic and acidic residues; the sequence is DHPHGGGEGRTGEARE.

The protein belongs to the universal ribosomal protein uL2 family. Part of the 50S ribosomal subunit. Forms a bridge to the 30S subunit in the 70S ribosome.

Functionally, one of the primary rRNA binding proteins. Required for association of the 30S and 50S subunits to form the 70S ribosome, for tRNA binding and peptide bond formation. It has been suggested to have peptidyltransferase activity; this is somewhat controversial. Makes several contacts with the 16S rRNA in the 70S ribosome. This chain is Large ribosomal subunit protein uL2, found in Neisseria meningitidis serogroup C (strain 053442).